The following is a 144-amino-acid chain: Large ribosomal subunit protein uL15 (144 aa).

A disordered region spans residues 1–48; that stretch reads MQLNNLKPAAGSKHAKRRVGRGIGSGLGKTAGRGHKGQKSRSGGFHKV. The span at 21 to 31 shows a compositional bias: gly residues; that stretch reads RGIGSGLGKTA.

The protein belongs to the universal ribosomal protein uL15 family. In terms of assembly, part of the 50S ribosomal subunit.

Functionally, binds to the 23S rRNA. This Cupriavidus taiwanensis (strain DSM 17343 / BCRC 17206 / CCUG 44338 / CIP 107171 / LMG 19424 / R1) (Ralstonia taiwanensis (strain LMG 19424)) protein is Large ribosomal subunit protein uL15.